Reading from the N-terminus, the 257-residue chain is Thiazole synthase (257 aa).

Lys-100 functions as the Schiff-base intermediate with DXP in the catalytic mechanism. Residues Gly-161, 187–188 (AG), and 209–210 (NT) each bind 1-deoxy-D-xylulose 5-phosphate.

The protein belongs to the ThiG family. Homotetramer. Forms heterodimers with either ThiH or ThiS.

The protein resides in the cytoplasm. The enzyme catalyses [ThiS sulfur-carrier protein]-C-terminal-Gly-aminoethanethioate + 2-iminoacetate + 1-deoxy-D-xylulose 5-phosphate = [ThiS sulfur-carrier protein]-C-terminal Gly-Gly + 2-[(2R,5Z)-2-carboxy-4-methylthiazol-5(2H)-ylidene]ethyl phosphate + 2 H2O + H(+). It functions in the pathway cofactor biosynthesis; thiamine diphosphate biosynthesis. Functionally, catalyzes the rearrangement of 1-deoxy-D-xylulose 5-phosphate (DXP) to produce the thiazole phosphate moiety of thiamine. Sulfur is provided by the thiocarboxylate moiety of the carrier protein ThiS. In vitro, sulfur can be provided by H(2)S. The protein is Thiazole synthase of Pelagibacter ubique (strain HTCC1062).